The sequence spans 334 residues: Glycerol-1-phosphate dehydrogenase [NAD(P)+] (334 aa).

Residues 77 to 81 (GRPID) and 99 to 102 (TTAS) each bind NAD(+). Asp-104 serves as a coordination point for substrate. Ser-108 lines the NAD(+) pocket. Asp-147 serves as a coordination point for substrate. Positions 147 and 225 each coordinate Zn(2+). Residue His-229 coordinates substrate. His-246 is a Zn(2+) binding site.

The protein belongs to the glycerol-1-phosphate dehydrogenase family. The cofactor is Zn(2+).

It localises to the cytoplasm. The catalysed reaction is sn-glycerol 1-phosphate + NAD(+) = dihydroxyacetone phosphate + NADH + H(+). The enzyme catalyses sn-glycerol 1-phosphate + NADP(+) = dihydroxyacetone phosphate + NADPH + H(+). It functions in the pathway membrane lipid metabolism; glycerophospholipid metabolism. Functionally, catalyzes the NAD(P)H-dependent reduction of dihydroxyacetonephosphate (DHAP or glycerone phosphate) to glycerol 1-phosphate (G1P). The G1P thus generated is used as the glycerophosphate backbone of phospholipids in the cellular membranes of Archaea. This chain is Glycerol-1-phosphate dehydrogenase [NAD(P)+], found in Methanococcus maripaludis (strain DSM 14266 / JCM 13030 / NBRC 101832 / S2 / LL).